A 233-amino-acid polypeptide reads, in one-letter code: Methyltransferase srdJ (233 aa).

The interval 1–32 is disordered; the sequence is MFQVQTAGTRTGTSSPDTTTSEAGLGSTPPMP. A compositionally biased stretch (low complexity) spans 9–21; that stretch reads TRTGTSSPDTTTS. Positions 40, 52, and 81 each coordinate S-adenosyl-L-methionine. A Required for methyltransferase activity motif is present at residues 140-146; it reads EISSQKY.

Belongs to the methyltransferase superfamily.

Methyltransferase; part of the gene cluster that mediates the biosynthesis of sordarial, a salicylic aldehyde structurally related to the phytotoxin pyriculol. The most interesting aspect of this pathway is formation of an aromatic product from the highly reducing polyketide synthase srdA. SrdA synthesizes a reduced polyketide chain from one molecule of acetyl-CoA and five molecules of malonyl-CoA. The polyketide chain is then reductively released as an aldehyde. The oxidoreductases srdC, srdD and srdE then oxidize one of the hydroxy groups to facilitate the intramolecular aldol condensation, followed by dehydration to yield a salicylic aldehyde. This aldehyde can undergo facile reduction by endogenous reductases to yield the alcohol 1-hydroxy-2-hydroxymethyl-3-pent-1,3-dienylbenzene. The flavin-dependent srdI counteract against the propensity of the aldehydes to be reduced under physiological conditions and is responsible for reoxidizing 1-hydroxy-2-hydroxymethyl-3-pent-1,3-dienylbenzene back to the salicylic aldehyde. This salicylic aldehyde is then selectively epoxidized by the cupin-domain-containing oxidoreductase srdB to yield the epoxide, which can be hydrolyzed stereoselectively by the hydrolase srdG to give the final product sordarial. In Neurospora crassa (strain ATCC 24698 / 74-OR23-1A / CBS 708.71 / DSM 1257 / FGSC 987), this protein is Methyltransferase srdJ.